The chain runs to 178 residues: Protein GrpE (178 aa).

A compositionally biased stretch (basic and acidic residues) spans 1–11; it reads MADELSEKSVE. A disordered region spans residues 1–32; the sequence is MADELSEKSVEGTEEDGESAPAEGTTEGVPVD.

It belongs to the GrpE family. As to quaternary structure, homodimer.

The protein resides in the cytoplasm. In terms of biological role, participates actively in the response to hyperosmotic and heat shock by preventing the aggregation of stress-denatured proteins, in association with DnaK and GrpE. It is the nucleotide exchange factor for DnaK and may function as a thermosensor. Unfolded proteins bind initially to DnaJ; upon interaction with the DnaJ-bound protein, DnaK hydrolyzes its bound ATP, resulting in the formation of a stable complex. GrpE releases ADP from DnaK; ATP binding to DnaK triggers the release of the substrate protein, thus completing the reaction cycle. Several rounds of ATP-dependent interactions between DnaJ, DnaK and GrpE are required for fully efficient folding. This Methanothrix thermoacetophila (strain DSM 6194 / JCM 14653 / NBRC 101360 / PT) (Methanosaeta thermophila) protein is Protein GrpE.